We begin with the raw amino-acid sequence, 103 residues long: Putative membrane protein insertion efficiency factor (103 aa).

This sequence belongs to the UPF0161 family.

Its subcellular location is the cell inner membrane. Functionally, could be involved in insertion of integral membrane proteins into the membrane. In Chlamydia pneumoniae (Chlamydophila pneumoniae), this protein is Putative membrane protein insertion efficiency factor.